The primary structure comprises 379 residues: Cytochrome b (379 aa).

4 helical membrane passes run 33–53 (FGSL…FLAM), 77–98 (WLIR…FIHV), 113–133 (WNIG…GYVL), and 178–198 (FFAF…VHLL). Residues histidine 83 and histidine 97 each coordinate heme b. Heme b contacts are provided by histidine 182 and histidine 196. Histidine 201 is a binding site for a ubiquinone. The next 4 helical transmembrane spans lie at 226 to 246 (TKDL…TLFF), 288 to 308 (LGGV…PLLN), 320 to 340 (ITQT…WIGG), and 347 to 367 (FTTI…ILIP).

The protein belongs to the cytochrome b family. As to quaternary structure, the cytochrome bc1 complex contains 11 subunits: 3 respiratory subunits (MT-CYB, CYC1 and UQCRFS1), 2 core proteins (UQCRC1 and UQCRC2) and 6 low-molecular weight proteins (UQCRH/QCR6, UQCRB/QCR7, UQCRQ/QCR8, UQCR10/QCR9, UQCR11/QCR10 and a cleavage product of UQCRFS1). This cytochrome bc1 complex then forms a dimer. Heme b is required as a cofactor.

The protein localises to the mitochondrion inner membrane. Its function is as follows. Component of the ubiquinol-cytochrome c reductase complex (complex III or cytochrome b-c1 complex) that is part of the mitochondrial respiratory chain. The b-c1 complex mediates electron transfer from ubiquinol to cytochrome c. Contributes to the generation of a proton gradient across the mitochondrial membrane that is then used for ATP synthesis. The sequence is that of Cytochrome b (MT-CYB) from Akodon azarae (Azara's grass mouse).